A 482-amino-acid polypeptide reads, in one-letter code: Signal recognition particle protein (482 aa).

Residues 107–114 (GLQGTGKT), 189–193 (DTAGR), and 247–250 (TKLD) contribute to the GTP site. 2 disordered regions span residues 380–413 (MTTE…TDVS) and 452–482 (FGGQ…FGQL). The segment covering 452-468 (FGGQPGPGFRGYRGGGG) has biased composition (gly residues). Over residues 469–482 (KPKKKKKKKGFGQL) the composition is skewed to basic residues.

The protein belongs to the GTP-binding SRP family. SRP54 subfamily. As to quaternary structure, part of the signal recognition particle protein translocation system, which is composed of SRP and FtsY.

The protein localises to the cytoplasm. The enzyme catalyses GTP + H2O = GDP + phosphate + H(+). Functionally, involved in targeting and insertion of nascent membrane proteins into the cytoplasmic membrane. Binds to the hydrophobic signal sequence of the ribosome-nascent chain (RNC) as it emerges from the ribosomes. The SRP-RNC complex is then targeted to the cytoplasmic membrane where it interacts with the SRP receptor FtsY. The sequence is that of Signal recognition particle protein from Synechocystis sp. (strain ATCC 27184 / PCC 6803 / Kazusa).